A 782-amino-acid chain; its full sequence is General transcription and DNA repair factor IIH helicase/translocase subunit XPB (782 aa).

Residues 1–11 (MGKRDRADRDK) show a composition bias toward basic and acidic residues. 2 disordered regions span residues 1-51 (MGKR…ESGT) and 220-240 (ISKTAEGSGGPSTSRVTDPQG). Residues 6–18 (RADRDKKKSRKRH) carry the Nuclear localization signal motif. The segment covering 21–30 (DEEDDEEDAP) has biased composition (acidic residues). Residues 327–488 (MFGNGRARSG…DLNFLIGPKL (162 aa)) enclose the Helicase ATP-binding domain. An ATP-binding site is contributed by 340–347 (LPCGAGKS). The short motif at 441–444 (DEVH) is the DEVH box element. One can recognise a Helicase C-terminal domain in the interval 542–702 (RACQFLIKFH…LAGMEEEDLA (161 aa)). S686 is subject to Phosphoserine. S751 is subject to Phosphoserine; by CK2.

It belongs to the helicase family. RAD25/XPB subfamily. Component of the 7-subunit TFIIH core complex composed of XPB/ERCC3, XPD/ERCC2, GTF2H1, GTF2H2, GTF2H3, GTF2H4 and GTF2H5, which is active in NER. The core complex associates with the 3-subunit CDK-activating kinase (CAK) module composed of CCNH/cyclin H, CDK7 and MNAT1 to form the 10-subunit holoenzyme (holo-TFIIH) active in transcription. Interacts with PUF60. Interacts with ATF7IP. Interacts with KAT2A; leading to KAT2A recruitment to promoters and acetylation of histones. Part of TBP-based Pol II pre-initiation complex (PIC), in which Pol II core assembles with general transcription factors and other specific initiation factors including GTF2E1, GTF2E2, GTF2F1, GTF2F2, TCEA1, ERCC2, ERCC3, GTF2H2, GTF2H3, GTF2H4, GTF2H5, GTF2A1, GTF2A2, GTF2B and TBP; this large multi-subunit PIC complex mediates DNA unwinding and targets Pol II core to the transcription start site where the first phosphodiester bond forms. In terms of processing, phosphorylation on Ser-751 by CK2 controls the 5'-excision activity of ERCC1-XPF endonuclease; phosphorylated protein inhibits the excision activity and thus NER. Dephosphorylation reactivates the 5'-excision step. Phosphorylation has no effect on transcription or the 3'-5' helicase activity.

The protein localises to the nucleus. The catalysed reaction is Couples ATP hydrolysis with the unwinding of duplex DNA by translocating in the 3'-5' direction.. The enzyme catalyses ATP + H2O = ADP + phosphate + H(+). With respect to regulation, phosphorylation on Ser-751 by CK2 controls the 5'-excision activity of ERCC1-XPF endonuclease; phosphorylated protein inhibits the excision activity and thus NER. ATPase activity is stimulated by TFIIH subunit p52 (GTF2H4). DNA translocase activity by this subunit in TFIIH is stimulated by XPA, ERCC5/XPG and XFP plus ERCC1. In terms of biological role, ATP-dependent 3'-5' DNA helicase/translocase; binds dsDNA rather than ssDNA, unzipping it in a translocase rather than classical helicase activity. Component of the general transcription and DNA repair factor IIH (TFIIH) core complex. When complexed to CDK-activating kinase (CAK), involved in RNA transcription by RNA polymerase II. The ATPase activity of XPB/ERCC3, but not its helicase activity, is required for DNA opening; it may wrap around the damaged DNA wedging it open, causing localized melting and twisting that allows XPD/ERCC2 helicase to anchor. The ATP-dependent helicase activity of XPB/ERCC3 may be required for promoter escape. Also involved in transcription-coupled nucleotide excision repair (NER) of damaged DNA. In NER, TFIIH acts by opening DNA around the lesion to allow the excision of the damaged oligonucleotide and its replacement by a new DNA fragment. The structure of the TFIIH transcription complex differs from the NER-TFIIH complex; large movements by XPD/ERCC2 and XPB/ERCC3 are stabilized by XPA. The sequence is that of General transcription and DNA repair factor IIH helicase/translocase subunit XPB (ERCC3) from Macaca fascicularis (Crab-eating macaque).